Consider the following 407-residue polypeptide: Nicotinate phosphoribosyltransferase (407 aa).

Residue His-224 is modified to Phosphohistidine; by autocatalysis.

It belongs to the NAPRTase family. Transiently phosphorylated on a His residue during the reaction cycle. Phosphorylation strongly increases the affinity for substrates and increases the rate of nicotinate D-ribonucleotide production. Dephosphorylation regenerates the low-affinity form of the enzyme, leading to product release.

The enzyme catalyses nicotinate + 5-phospho-alpha-D-ribose 1-diphosphate + ATP + H2O = nicotinate beta-D-ribonucleotide + ADP + phosphate + diphosphate. Its pathway is cofactor biosynthesis; NAD(+) biosynthesis; nicotinate D-ribonucleotide from nicotinate: step 1/1. In terms of biological role, catalyzes the synthesis of beta-nicotinate D-ribonucleotide from nicotinate and 5-phospho-D-ribose 1-phosphate at the expense of ATP. The sequence is that of Nicotinate phosphoribosyltransferase from Pseudomonas savastanoi pv. phaseolicola (strain 1448A / Race 6) (Pseudomonas syringae pv. phaseolicola (strain 1448A / Race 6)).